The following is a 612-amino-acid chain: Dihydroxy-acid dehydratase (612 aa).

Position 81 (Asp81) interacts with Mg(2+). Residue Cys122 coordinates [2Fe-2S] cluster. Asp123 and Lys124 together coordinate Mg(2+). Lys124 carries the N6-carboxylysine modification. Cys193 lines the [2Fe-2S] cluster pocket. Mg(2+) is bound at residue Glu489. Catalysis depends on Ser515, which acts as the Proton acceptor.

The protein belongs to the IlvD/Edd family. As to quaternary structure, homodimer. [2Fe-2S] cluster is required as a cofactor. It depends on Mg(2+) as a cofactor.

It catalyses the reaction (2R)-2,3-dihydroxy-3-methylbutanoate = 3-methyl-2-oxobutanoate + H2O. It carries out the reaction (2R,3R)-2,3-dihydroxy-3-methylpentanoate = (S)-3-methyl-2-oxopentanoate + H2O. It functions in the pathway amino-acid biosynthesis; L-isoleucine biosynthesis; L-isoleucine from 2-oxobutanoate: step 3/4. The protein operates within amino-acid biosynthesis; L-valine biosynthesis; L-valine from pyruvate: step 3/4. In terms of biological role, functions in the biosynthesis of branched-chain amino acids. Catalyzes the dehydration of (2R,3R)-2,3-dihydroxy-3-methylpentanoate (2,3-dihydroxy-3-methylvalerate) into 2-oxo-3-methylpentanoate (2-oxo-3-methylvalerate) and of (2R)-2,3-dihydroxy-3-methylbutanoate (2,3-dihydroxyisovalerate) into 2-oxo-3-methylbutanoate (2-oxoisovalerate), the penultimate precursor to L-isoleucine and L-valine, respectively. This is Dihydroxy-acid dehydratase from Xanthomonas campestris pv. campestris (strain B100).